Consider the following 65-residue polypeptide: Large ribosomal subunit protein uL30 (65 aa).

It belongs to the universal ribosomal protein uL30 family. Part of the 50S ribosomal subunit.

This chain is Large ribosomal subunit protein uL30, found in Onion yellows phytoplasma (strain OY-M).